Consider the following 87-residue polypeptide: MSEEQLKAFIAKVQGDSSLQEQLKAEGADVVAIAKAAGFTIKQQDLNAAASELSDEELEAASGGGDTGIQAVLHTAGCYGGTKMCRA.

The propeptide occupies 1–64 (MSEEQLKAFI…DEELEAASGG (64 aa)). Thr-67 bears the 2,3-didehydrobutyrine mark. The beta-methyllanthionine (Thr-Cys) cross-link spans 75 to 85 (TAGCYGGTKMC). A cross-link (beta-methyllanthionine (Cys-Thr)) is located at residues 78–82 (CYGGT).

Cross-links are proved in vitro, when coepressed in E.coli with the ProcM lanthionine synthetase. Post-translationally, the beta-methyllanthionine residues have a DL configuration (with 2S,3S,6R stereochemistry). In terms of processing, maturation of prochlorosin involves the enzymatic conversion of Thr, and Ser into dehydrated AA and the formation of thioether bonds with cysteines. This is followed by membrane translocation and cleavage of the modified precursor.

The protein resides in the secreted. Its function is as follows. Lanthionine-containing peptide (lantipeptide) with unknown function. Does not show antibiotic activity against Lactococcus lactis 117 and Bacillus subtilis 6633 bacteria. Organisms that produce this peptide live in oligotrophic environments at very dilute concentrations, suggesting this peptide is not secreted to influence other bacteria. This chain is Lantipeptide prochlorosin 3.3, found in Prochlorococcus marinus (strain MIT 9313).